A 479-amino-acid polypeptide reads, in one-letter code: MTSFVSFLPELVLLAGALALFVVTLGQNNVRLARILSVATASGVLVAALATVNHSAVLFSGAYRVDAFSQLLKIAIAFGYLCVGILSGQLRDIRGEAKPEYFLFLALSMTGLLALVSSIDVITLIIALELSSFPLYLMVAMRREREGQRVQMESAIKYIMFGIAANGVMFFGFGYLYGLTGSTSLPVILEKLPPLLSSPLAVTGLALTLAGFLYKLAVFPFHFWTPDVYQGSSNETASLIASLPKLGAVAVLVRFVSLAAPGHETLATLLTCLAIASMVYGNLIALVQTDLKRLLGFSGIAHAGYVMVGFVAMDNFGFASALYYIAGYMLMVLACFVVVCQVSRDGANVAITELAGLHKRSPLLAVTLIVGVFALAGVPPFVGFMAKLNLLTSAWQAGHTALVVLTVINSAIAIYYYLQIVRAAFFAESDAQPAPIALTPSMSALCVLLIVAITLLGVAPAFTIDAITNSLATISTVSS.

14 consecutive transmembrane segments (helical) span residues 4-24, 43-63, 67-87, 99-119, 121-141, 159-179, 201-221, 239-259, 267-287, 294-314, 318-338, 364-384, 401-421, and 444-464; these read FVSFLPELVLLAGALALFVVT, GVLVAALATVNHSAVLFSGAY, AFSQLLKIAIAFGYLCVGILS, PEYFLFLALSMTGLLALVSSI, VITLIIALELSSFPLYLMVAM, IMFGIAANGVMFFGFGYLYGL, AVTGLALTLAGFLYKLAVFPF, LIASLPKLGAVAVLVRFVSLA, ATLLTCLAIASMVYGNLIALV, LLGFSGIAHAGYVMVGFVAMD, FASALYYIAGYMLMVLACFVV, LAVTLIVGVFALAGVPPFVGF, ALVVLTVINSAIAIYYYLQIV, and ALCVLLIVAITLLGVAPAFTI.

The protein belongs to the complex I subunit 2 family. In terms of assembly, NDH-1 is composed of 14 different subunits. Subunits NuoA, H, J, K, L, M, N constitute the membrane sector of the complex.

It localises to the cell inner membrane. It carries out the reaction a quinone + NADH + 5 H(+)(in) = a quinol + NAD(+) + 4 H(+)(out). Its function is as follows. NDH-1 shuttles electrons from NADH, via FMN and iron-sulfur (Fe-S) centers, to quinones in the respiratory chain. The immediate electron acceptor for the enzyme in this species is believed to be ubiquinone. Couples the redox reaction to proton translocation (for every two electrons transferred, four hydrogen ions are translocated across the cytoplasmic membrane), and thus conserves the redox energy in a proton gradient. This Opitutus terrae (strain DSM 11246 / JCM 15787 / PB90-1) protein is NADH-quinone oxidoreductase subunit N 2.